The sequence spans 213 residues: Orotidine 5'-phosphate decarboxylase (213 aa).

Residues D11, K33, 61-70 (DLKLADIPNT), S113, 166-176 (PGVGAQGGKAS), G189, and R190 each bind substrate. K63 (proton donor) is an active-site residue.

Belongs to the OMP decarboxylase family. Type 1 subfamily. As to quaternary structure, homodimer.

The enzyme catalyses orotidine 5'-phosphate + H(+) = UMP + CO2. Its pathway is pyrimidine metabolism; UMP biosynthesis via de novo pathway; UMP from orotate: step 2/2. Its function is as follows. Catalyzes the decarboxylation of orotidine 5'-monophosphate (OMP) to uridine 5'-monophosphate (UMP). In Thermococcus kodakarensis (strain ATCC BAA-918 / JCM 12380 / KOD1) (Pyrococcus kodakaraensis (strain KOD1)), this protein is Orotidine 5'-phosphate decarboxylase.